A 33-amino-acid polypeptide reads, in one-letter code: Photosystem II reaction center protein Psb30 (33 aa).

A helical membrane pass occupies residues 5–25; the sequence is LIVQLGSLTLITIAGPLIVAL.

Belongs to the Psb30/Ycf12 family. In terms of assembly, PSII is composed of 1 copy each of membrane proteins PsbA, PsbB, PsbC, PsbD, PsbE, PsbF, PsbH, PsbI, PsbJ, PsbK, PsbL, PsbM, PsbT, PsbY, PsbZ, Psb30/Ycf12, peripheral proteins of the oxygen-evolving complex and a large number of cofactors. It forms dimeric complexes.

It is found in the plastid. Its subcellular location is the chloroplast thylakoid membrane. Its function is as follows. A core subunit of photosystem II (PSII), probably helps stabilize the reaction center. This Euglena mutabilis protein is Photosystem II reaction center protein Psb30.